The sequence spans 338 residues: Ketol-acid reductoisomerase (NADP(+)) (338 aa).

Residues 1 to 181 form the KARI N-terminal Rossmann domain; that stretch reads MKVFYDKDCD…GGGRAGIIET (181 aa). NADP(+) contacts are provided by residues 24–27, arginine 47, and serine 52; that span reads YGSQ. Residue histidine 107 is part of the active site. Residue glycine 133 coordinates NADP(+). In terms of domain architecture, KARI C-terminal knotted spans 182-327; sequence DFREETETDL…GKLRAMMPWI (146 aa). Mg(2+) contacts are provided by aspartate 190, glutamate 194, glutamate 226, and glutamate 230. Serine 251 provides a ligand contact to substrate.

The protein belongs to the ketol-acid reductoisomerase family. Mg(2+) serves as cofactor.

It catalyses the reaction (2R)-2,3-dihydroxy-3-methylbutanoate + NADP(+) = (2S)-2-acetolactate + NADPH + H(+). It carries out the reaction (2R,3R)-2,3-dihydroxy-3-methylpentanoate + NADP(+) = (S)-2-ethyl-2-hydroxy-3-oxobutanoate + NADPH + H(+). It functions in the pathway amino-acid biosynthesis; L-isoleucine biosynthesis; L-isoleucine from 2-oxobutanoate: step 2/4. The protein operates within amino-acid biosynthesis; L-valine biosynthesis; L-valine from pyruvate: step 2/4. Involved in the biosynthesis of branched-chain amino acids (BCAA). Catalyzes an alkyl-migration followed by a ketol-acid reduction of (S)-2-acetolactate (S2AL) to yield (R)-2,3-dihydroxy-isovalerate. In the isomerase reaction, S2AL is rearranged via a Mg-dependent methyl migration to produce 3-hydroxy-3-methyl-2-ketobutyrate (HMKB). In the reductase reaction, this 2-ketoacid undergoes a metal-dependent reduction by NADPH to yield (R)-2,3-dihydroxy-isovalerate. The polypeptide is Ketol-acid reductoisomerase (NADP(+)) (Bordetella petrii (strain ATCC BAA-461 / DSM 12804 / CCUG 43448)).